Consider the following 73-residue polypeptide: Translation initiation factor IF-1 (73 aa).

One can recognise an S1-like domain in the interval 1 to 73; that stretch reads MGKKEEAFEV…TKGRIVYRER (73 aa).

The protein belongs to the IF-1 family. As to quaternary structure, component of the 30S ribosomal translation pre-initiation complex which assembles on the 30S ribosome in the order IF-2 and IF-3, IF-1 and N-formylmethionyl-tRNA(fMet); mRNA recruitment can occur at any time during PIC assembly.

The protein localises to the cytoplasm. One of the essential components for the initiation of protein synthesis. Stabilizes the binding of IF-2 and IF-3 on the 30S subunit to which N-formylmethionyl-tRNA(fMet) subsequently binds. Helps modulate mRNA selection, yielding the 30S pre-initiation complex (PIC). Upon addition of the 50S ribosomal subunit IF-1, IF-2 and IF-3 are released leaving the mature 70S translation initiation complex. This Rhodopirellula baltica (strain DSM 10527 / NCIMB 13988 / SH1) protein is Translation initiation factor IF-1.